The sequence spans 505 residues: Aspartyl/glutamyl-tRNA(Asn/Gln) amidotransferase subunit B (505 aa).

The protein belongs to the GatB/GatE family. GatB subfamily. As to quaternary structure, heterotrimer of A, B and C subunits.

It catalyses the reaction L-glutamyl-tRNA(Gln) + L-glutamine + ATP + H2O = L-glutaminyl-tRNA(Gln) + L-glutamate + ADP + phosphate + H(+). The catalysed reaction is L-aspartyl-tRNA(Asn) + L-glutamine + ATP + H2O = L-asparaginyl-tRNA(Asn) + L-glutamate + ADP + phosphate + 2 H(+). Allows the formation of correctly charged Asn-tRNA(Asn) or Gln-tRNA(Gln) through the transamidation of misacylated Asp-tRNA(Asn) or Glu-tRNA(Gln) in organisms which lack either or both of asparaginyl-tRNA or glutaminyl-tRNA synthetases. The reaction takes place in the presence of glutamine and ATP through an activated phospho-Asp-tRNA(Asn) or phospho-Glu-tRNA(Gln). The polypeptide is Aspartyl/glutamyl-tRNA(Asn/Gln) amidotransferase subunit B (Corynebacterium jeikeium (strain K411)).